The sequence spans 343 residues: 2-alkenal reductase (NADP(+)-dependent) (343 aa).

Tyr-55 and Tyr-80 together coordinate substrate. Residues 165 to 166 (AV), Gly-186, Lys-190, Tyr-206, Asn-230, Cys-252, Tyr-258, 282 to 284 (FLV), and Asn-332 each bind NADP(+).

Belongs to the NADP-dependent oxidoreductase L4BD family. Homodimer.

The catalysed reaction is an n-alkanal + NADP(+) = an alk-2-enal + NADPH + H(+). Its function is as follows. Reduces the C=C double bonds of alpha, beta unsaturated enones, but has no activity on enones with an endocyclic C=C double-bond. Shows a high specificity for NADPH as the hybrid donor. Substrates are 1-nitrocyclohexene, 2-methylpentenal, trans-cinnamaldehyde, methyl-trans-2-methylcinnamaldehyde, trans-2-nonenal and 1-octen-3-one. Reduced activity with aplha-methyl transcinnamaldehyde, 1-cyclohexene-1-carboxaldehyde, methyl crotonate, (R)-pulegone, and dimethyl itaconate and no activity with maleimides, citral, (5R)- or (5S)-carvone, (S)-perillyl alcohol, and substituted cyclohexenones and cyclopentenones. May also act as a allyl-alcohol dehydrogenase by catalyzing the dehydrogenation of secondary allylic alcohols rather than saturated secondary alcohols. Allyl-alcohol dehydrogenase is specific for the S-stereoisomer of the alcohols. This is 2-alkenal reductase (NADP(+)-dependent) (DBR) from Nicotiana tabacum (Common tobacco).